A 452-amino-acid polypeptide reads, in one-letter code: Phosphoglucosamine mutase (452 aa).

The active-site Phosphoserine intermediate is Ser-108. Mg(2+) contacts are provided by Ser-108, Asp-247, Asp-249, and Asp-251. Ser-108 bears the Phosphoserine mark.

This sequence belongs to the phosphohexose mutase family. Mg(2+) is required as a cofactor. In terms of processing, activated by phosphorylation.

The catalysed reaction is alpha-D-glucosamine 1-phosphate = D-glucosamine 6-phosphate. In terms of biological role, catalyzes the conversion of glucosamine-6-phosphate to glucosamine-1-phosphate. The sequence is that of Phosphoglucosamine mutase from Paraburkholderia phytofirmans (strain DSM 17436 / LMG 22146 / PsJN) (Burkholderia phytofirmans).